The sequence spans 138 residues: Putative pre-16S rRNA nuclease (138 aa).

The protein belongs to the YqgF nuclease family.

The protein localises to the cytoplasm. In terms of biological role, could be a nuclease involved in processing of the 5'-end of pre-16S rRNA. The protein is Putative pre-16S rRNA nuclease (yrrK) of Bacillus subtilis (strain 168).